Consider the following 165-residue polypeptide: MIVLTRRISDPGTLAVSGTVTLDVDSRIKSRLRLTLDDGREAGLMLERGHLLRGGELLADADGTHLIRVLAAPEAVSTVRCADPHLLARAAYHLGNRHVPLQIEPGLLRFQHDHVLDDMLRGLGLTVEAEQAPFEPEAGAYQSAPHGHSHAHGHDHPFVRLPAHS.

A disordered region spans residues 137–156 (EAGAYQSAPHGHSHAHGHDH).

It belongs to the UreE family.

The protein localises to the cytoplasm. Functionally, involved in urease metallocenter assembly. Binds nickel. Probably functions as a nickel donor during metallocenter assembly. The chain is Urease accessory protein UreE from Pseudomonas putida (strain GB-1).